Here is a 64-residue protein sequence, read N- to C-terminus: MLILTRRVGETLMIGDQVSVTVLGVKGNQVRIGINAPKDVAVHREEIYERIKNEGDEGQATGGN.

The protein belongs to the CsrA/RsmA family. As to quaternary structure, homodimer; the beta-strands of each monomer intercalate to form a hydrophobic core, while the alpha-helices form wings that extend away from the core.

Its subcellular location is the cytoplasm. Its function is as follows. A key translational regulator that binds mRNA to regulate translation initiation and/or mRNA stability. Mediates global changes in gene expression, shifting from rapid growth to stress survival by linking envelope stress, the stringent response and the catabolite repression systems. Usually binds in the 5'-UTR; binding at or near the Shine-Dalgarno sequence prevents ribosome-binding, repressing translation, binding elsewhere in the 5'-UTR can activate translation and/or stabilize the mRNA. Its function is antagonized by small RNA(s). In Thioalkalivibrio sulfidiphilus (strain HL-EbGR7), this protein is Translational regulator CsrA.